Consider the following 373-residue polypeptide: tRNA-specific 2-thiouridylase MnmA (373 aa).

ATP contacts are provided by residues Gly-12–Ser-19 and Met-38. An interaction with target base in tRNA region spans residues Asn-98–Asp-100. The Nucleophile role is filled by Cys-103. An intrachain disulfide couples Cys-103 to Cys-200. ATP is bound at residue Gly-127. The tract at residues Lys-150–Gln-152 is interaction with tRNA. Cys-200 functions as the Cysteine persulfide intermediate in the catalytic mechanism. Residues Arg-312–Tyr-313 are interaction with tRNA.

The protein belongs to the MnmA/TRMU family.

The protein localises to the cytoplasm. The enzyme catalyses S-sulfanyl-L-cysteinyl-[protein] + uridine(34) in tRNA + AH2 + ATP = 2-thiouridine(34) in tRNA + L-cysteinyl-[protein] + A + AMP + diphosphate + H(+). Its function is as follows. Catalyzes the 2-thiolation of uridine at the wobble position (U34) of tRNA, leading to the formation of s(2)U34. The sequence is that of tRNA-specific 2-thiouridylase MnmA from Streptococcus thermophilus (strain ATCC BAA-491 / LMD-9).